Reading from the N-terminus, the 173-residue chain is Sialic acid TRAP transporter small permease protein SiaQ (173 aa).

4 consecutive transmembrane segments (helical) span residues 13 to 33, 46 to 66, 87 to 107, and 123 to 143; these read IEEI…TWQI, SEEL…AIAI, LSLV…IIVL, and LGIS…FMVF.

The protein belongs to the TRAP transporter small permease family. The complex comprises the extracytoplasmic solute receptor protein SiaP, and the two transmembrane proteins SiaQ and SiaM. SiaQ and SiaM form a tight 1:1 complex.

Its subcellular location is the cell inner membrane. Part of the tripartite ATP-independent periplasmic (TRAP) transport system SiaPQM that catalyzes unidirectional Na(+)-dependent sialic acid uptake. The sequence is that of Sialic acid TRAP transporter small permease protein SiaQ from Vibrio cholerae serotype O1 (strain ATCC 39315 / El Tor Inaba N16961).